A 265-amino-acid polypeptide reads, in one-letter code: Inositol monophosphatase 2 (265 aa).

Mg(2+) is bound by residues Glu65, Asp86, Leu88, and Asp89. Residue Glu65 participates in substrate binding. Substrate-binding positions include 88–91, 189–191, Glu208, and Asp216; these read LDGT and GSC. Mg(2+) is bound at residue Asp216.

It belongs to the inositol monophosphatase superfamily. It depends on Mg(2+) as a cofactor. In terms of tissue distribution, low expression in roots, stems, leaves, flowers and young and mature green fruits. Expressed in the stem/leaf junctions, below the shoot apex and on the abaxial side of the petiole of the first expanded leaflets.

The catalysed reaction is a myo-inositol phosphate + H2O = myo-inositol + phosphate. Its pathway is polyol metabolism; myo-inositol biosynthesis; myo-inositol from D-glucose 6-phosphate: step 2/2. In terms of biological role, responsible for the provision of inositol required for synthesis of phosphatidylinositol and polyphosphoinositides. This Solanum lycopersicum (Tomato) protein is Inositol monophosphatase 2 (IMP2).